Here is a 530-residue protein sequence, read N- to C-terminus: Ankyrin repeat domain-containing protein 53 (530 aa).

The span at 1–15 (MASAGSTARRAGSGS) shows a compositional bias: low complexity. The tract at residues 1-99 (MASAGSTARR…PSPSKESDQT (99 aa)) is disordered. Residues 32 to 41 (PSGSMQQANK) are compositionally biased toward polar residues. ANK repeat units lie at residues 139–169 (KGFT…PVDL), 173–206 (NSQT…DLNA), and 210–239 (NGST…NVHA). 2 disordered regions span residues 323-360 (GHSL…VDAR) and 383-402 (PTMW…QISH). Polar residues-rich tracts occupy residues 326-341 (LVSN…LSKT) and 386-402 (WNVS…QISH).

Interacts with PSRC1; recruited by PSRC1 to the spindle during mitosis. Phosphorylated during mitosis.

It localises to the cytoplasm. Its subcellular location is the cytoskeleton. It is found in the spindle. The protein resides in the spindle pole. Its function is as follows. Required for normal progression through mitosis. Involved in chromosome alignment and cytokinesis via regulation of microtubules polymerization. This is Ankyrin repeat domain-containing protein 53 (ANKRD53) from Homo sapiens (Human).